The primary structure comprises 1898 residues: Receptor-type tyrosine-protein phosphatase F (1898 aa).

Residues M1–G29 form the signal peptide. The Extracellular portion of the chain corresponds to D30–W1254. Ig-like C2-type domains follow at residues P33–S123, P135–Y224, and P232–T314. A disulfide bridge connects residues C54 and C107. Residue K68–R77 coordinates heparin. N117 carries N-linked (GlcNAc...) asparagine glycosylation. A disulfide bridge links C156 with C207. N-linked (GlcNAc...) asparagine glycans are attached at residues N250 and N295. C253 and C298 are oxidised to a cystine. Fibronectin type-III domains lie at P321–Q411, P416–G510, Q514–S604, P609–D706, P711–A810, V811–V905, F909–V1001, and F1005–D1089. Residues P399–R418 are disordered. The segment at G693–R713 is disordered. N721 carries N-linked (GlcNAc...) asparagine glycosylation. N-linked (GlcNAc...) asparagine glycans are attached at residues N941 and N957. Residues V1255 to F1275 form a helical membrane-spanning segment. Residues K1276–T1898 are Cytoplasmic-facing. The residue at position 1296 (S1296) is a Phosphoserine. 2 Tyrosine-protein phosphatase domains span residues F1343–A1598 and M1630–Y1889. Residues D1507, C1539 to R1545, and Q1583 contribute to the substrate site. The Phosphocysteine intermediate role is filled by C1539. C1830 functions as the Phosphocysteine intermediate in the catalytic mechanism.

Belongs to the protein-tyrosine phosphatase family. Receptor class 2A subfamily. In terms of assembly, interacts with GRIP1. Interacts with PPFIA1, PPFIA2 and PPFIA3. Interacts with INSR.

It is found in the membrane. The enzyme catalyses O-phospho-L-tyrosyl-[protein] + H2O = L-tyrosyl-[protein] + phosphate. Its function is as follows. Possible cell adhesion receptor. It possesses an intrinsic protein tyrosine phosphatase activity (PTPase) and dephosphorylates EPHA2 regulating its activity. In terms of biological role, the first PTPase domain has enzymatic activity, while the second one seems to affect the substrate specificity of the first one. The polypeptide is Receptor-type tyrosine-protein phosphatase F (PTPRF) (Bos taurus (Bovine)).